A 158-amino-acid chain; its full sequence is Succinate dehydrogenase [ubiquinone] cytochrome b small subunit, mitochondrial (158 aa).

A mitochondrion-targeting transit peptide spans 1–55; that stretch reads MALWRLSVLCGAREGRALFLRTPVVRPALVSAFLQDRPAQGWCGTQHIHLSPSHH. Topologically, residues 56–62 are mitochondrial matrix; sequence SGSKAAS. A helical transmembrane segment spans residues 63 to 84; the sequence is LHWTGERVVSVLLLGLIPAAYL. Over 85 to 89 the chain is Mitochondrial intermembrane; that stretch reads NPCSA. Residues 90-110 form a helical membrane-spanning segment; it reads MDYSLAATLTLHSHWGIGQVV. A heme b-binding site is contributed by histidine 101. Residues 111–119 are Mitochondrial matrix-facing; the sequence is TDYVHGDAV. Tyrosine 113 is a binding site for a ubiquinone. The chain crosses the membrane as a helical span at residues 120–141; that stretch reads QKAAKTGLLVLSAFTFAGLCYF. At 142–158 the chain is on the mitochondrial intermembrane side; that stretch reads NYHDVGICKAVAMLWKL.

Belongs to the CybS family. Component of complex II composed of four subunits: the flavoprotein (FP) SDHA, iron-sulfur protein (IP) SDHB, and a cytochrome b560 composed of SDHC and SDHD.

The protein localises to the mitochondrion inner membrane. It participates in carbohydrate metabolism; tricarboxylic acid cycle. In terms of biological role, membrane-anchoring subunit of succinate dehydrogenase (SDH) that is involved in complex II of the mitochondrial electron transport chain and is responsible for transferring electrons from succinate to ubiquinone (coenzyme Q). SDH also oxidizes malate to the non-canonical enol form of oxaloacetate, enol-oxaloacetate. Enol-oxaloacetate, which is a potent inhibitor of the succinate dehydrogenase activity, is further isomerized into keto-oxaloacetate. This chain is Succinate dehydrogenase [ubiquinone] cytochrome b small subunit, mitochondrial (SDHD), found in Bos taurus (Bovine).